We begin with the raw amino-acid sequence, 296 residues long: Protoheme IX farnesyltransferase (296 aa).

The next 9 helical transmembrane spans lie at 11 to 31, 35 to 55, 84 to 104, 107 to 127, 132 to 152, 162 to 182, 208 to 228, 229 to 249, and 264 to 284; these read PGIIFGNLISVIGGFLLAAQG, YPLFLATLVGVSLVVASGCVF, VTLVYASLLGIAGFALLYVAA, LAMWLAVMGFVVYVGVYSLYM, VYGTLIGSLSGAAPPVIGYCA, LILLLIFSLWQMPHSYAIAIF, ITLYIVAFAIATLMLSLGGYA, GYKYLIVAAAVSVWWLGMALS, and LFVFSIVAITSLSVMMSVDSM.

Belongs to the UbiA prenyltransferase family. Protoheme IX farnesyltransferase subfamily.

Its subcellular location is the cell inner membrane. The catalysed reaction is heme b + (2E,6E)-farnesyl diphosphate + H2O = Fe(II)-heme o + diphosphate. It functions in the pathway porphyrin-containing compound metabolism; heme O biosynthesis; heme O from protoheme: step 1/1. Converts heme B (protoheme IX) to heme O by substitution of the vinyl group on carbon 2 of heme B porphyrin ring with a hydroxyethyl farnesyl side group. The polypeptide is Protoheme IX farnesyltransferase (Pectobacterium atrosepticum (strain SCRI 1043 / ATCC BAA-672) (Erwinia carotovora subsp. atroseptica)).